A 474-amino-acid polypeptide reads, in one-letter code: MFLAAIHVITFFISENSKSFYTMSTPTSAFNAMLDDIGIEIQDDISALCSTLADPSDAEPAPPVHDVDDLLASVGPDKRKKIRSGLLTIHPPSSHPSWLKPETWFPQCDDILEIWCAKFEKGEDTGNLHVHIYFKLKHSNTIRFELLQKWITKHVTGFDFKPQRSATKNSTQCVVNYVLKPETSVGDPFIWNASCAFDQKTWDARHKGKGKKQEIIDHIMARDWTLSWASLVHESDESRALLADCGWGKRFQEDRAAAQPRRKIKDVVILYGAAGTGKTTMAMDWDSKPDETTKARYYRRSCDEDFWGGGATAYNGQRVIHYDEFGGQEKFASLKEITSIGLPGPPVKVKGSGRDLNHDTVVFTSNVHPAGWYKGVWAKDPHQFKPFQRRVTKVLFFPRERPDGTENVPSDGNPAHFVDQTPEWVAFGDNLDLAIEHAESCWPLPATIEDDGGGAFAPGFSLTSEPEPKRRRFF.

Positions G248 to R255 match the Nuclear localization signal motif. The disordered stretch occupies residues A455 to F474.

The protein resides in the host nucleus. In terms of biological role, plays an essential for the replication of viral DNA. Presumably cleaves viral genomic dsRNA replicative form to initiate rolling circle replication. The chain is Replication-associated protein from Avon-Heathcote Estuary associated kieseladnavirus (AHEaBV).